The sequence spans 78 residues: Large ribosomal subunit protein bL28 (78 aa).

Residues 1–21 (MSRVCQVTGKKPMVGNNRSHA) form a disordered region.

It belongs to the bacterial ribosomal protein bL28 family.

This Shewanella piezotolerans (strain WP3 / JCM 13877) protein is Large ribosomal subunit protein bL28.